Here is a 252-residue protein sequence, read N- to C-terminus: Tricin synthase 1 (252 aa).

S-adenosyl-L-methionine contacts are provided by residues Ser-65, Glu-87, 89–90, Ser-95, and Asp-113; that span reads GV. A divalent metal cation is bound at residue Asp-168. Asp-170 is a binding site for S-adenosyl-L-methionine. A divalent metal cation contacts are provided by Asp-194 and Asn-195.

The protein belongs to the class I-like SAM-binding methyltransferase superfamily. Cation-dependent O-methyltransferase family. CCoAMT subfamily. Mg(2+) is required as a cofactor. Requires Mn(2+) as cofactor. The cofactor is Co(2+). Ubiquitous. Highest expression in stems and roots.

It localises to the nucleus. It carries out the reaction tricetin + 2 S-adenosyl-L-methionine = 3',5'-di-O-methyltricetin + 2 S-adenosyl-L-homocysteine + 2 H(+). Functionally, catalyzes the stepwise methylation of tricetin to its 3'-mono- and 3',5'-dimethyl ethers. No 3',4',5'-trimethylated ester derivatives are produced. Can use caffeoyl-CoA, 5-hydroxyferulic acid, luteolin, tricetin, quercetin, myrcetin and 7,8-dihydroxyflavone as substrates, but not naringenin, apigenin or kaempferol. The 2,3-double bond and the O-dihydroxyl group of the substrate are both required for catalytic activity of the enzyme. The protein is Tricin synthase 1 (ROMT-15) of Oryza sativa subsp. japonica (Rice).